Here is a 399-residue protein sequence, read N- to C-terminus: uncharacterized protein (399 aa).

This sequence belongs to the TelA family.

This is an uncharacterized protein from Listeria monocytogenes serovar 1/2a (strain ATCC BAA-679 / EGD-e).